The chain runs to 183 residues: Ribosome-recycling factor (183 aa).

The protein belongs to the RRF family.

Its subcellular location is the cytoplasm. Functionally, responsible for the release of ribosomes from messenger RNA at the termination of protein biosynthesis. May increase the efficiency of translation by recycling ribosomes from one round of translation to another. In Buchnera aphidicola subsp. Baizongia pistaciae (strain Bp), this protein is Ribosome-recycling factor.